Here is a 263-residue protein sequence, read N- to C-terminus: Endonuclease 8 (263 aa).

The Schiff-base intermediate with DNA role is filled by P2. Residue E3 is the Proton donor of the active site. Residue K53 is the Proton donor; for beta-elimination activity of the active site. DNA-binding residues include Q70, R125, and N169. The segment at 229–263 (KVFHRDGERCERCGGVIEKTTLSSRPFYWCPGCQH) adopts an FPG-type zinc-finger fold. Catalysis depends on R253, which acts as the Proton donor; for delta-elimination activity.

It belongs to the FPG family. Zn(2+) is required as a cofactor.

It catalyses the reaction 2'-deoxyribonucleotide-(2'-deoxyribose 5'-phosphate)-2'-deoxyribonucleotide-DNA = a 3'-end 2'-deoxyribonucleotide-(2,3-dehydro-2,3-deoxyribose 5'-phosphate)-DNA + a 5'-end 5'-phospho-2'-deoxyribonucleoside-DNA + H(+). Its function is as follows. Involved in base excision repair of DNA damaged by oxidation or by mutagenic agents. Acts as a DNA glycosylase that recognizes and removes damaged bases. Has a preference for oxidized pyrimidines, such as thymine glycol, 5,6-dihydrouracil and 5,6-dihydrothymine. Has AP (apurinic/apyrimidinic) lyase activity and introduces nicks in the DNA strand. Cleaves the DNA backbone by beta-delta elimination to generate a single-strand break at the site of the removed base with both 3'- and 5'-phosphates. The protein is Endonuclease 8 of Klebsiella pneumoniae (strain 342).